A 485-amino-acid polypeptide reads, in one-letter code: Argininosuccinate lyase (485 aa).

The protein belongs to the lyase 1 family. Argininosuccinate lyase subfamily.

It is found in the cytoplasm. It catalyses the reaction 2-(N(omega)-L-arginino)succinate = fumarate + L-arginine. Its pathway is amino-acid biosynthesis; L-arginine biosynthesis; L-arginine from L-ornithine and carbamoyl phosphate: step 3/3. This chain is Argininosuccinate lyase, found in Nitrosopumilus maritimus (strain SCM1).